Consider the following 219-residue polypeptide: UPF0502 protein Gmet_0262 (219 aa).

Belongs to the UPF0502 family.

This Geobacter metallireducens (strain ATCC 53774 / DSM 7210 / GS-15) protein is UPF0502 protein Gmet_0262.